A 491-amino-acid chain; its full sequence is Argininosuccinate lyase (491 aa).

This sequence belongs to the lyase 1 family. Argininosuccinate lyase subfamily.

It localises to the cytoplasm. It carries out the reaction 2-(N(omega)-L-arginino)succinate = fumarate + L-arginine. It participates in amino-acid biosynthesis; L-arginine biosynthesis; L-arginine from L-ornithine and carbamoyl phosphate: step 3/3. This is Argininosuccinate lyase from Methanosarcina barkeri (strain Fusaro / DSM 804).